The sequence spans 963 residues: Iron-responsive element-binding protein 2 (963 aa).

The [4Fe-4S] cluster site is built by Cys512, Cys578, and Cys581.

It belongs to the aconitase/IPM isomerase family. In terms of assembly, interacts with RBCK1 only in iron-rich conditions. Interacts (when associated with the 4Fe-4S) with FBXL5. Interacts with CIAO1 and CIAO2A. It depends on [4Fe-4S] cluster as a cofactor. Post-translationally, ubiquitinated and degraded by the proteasome in presence of high level of iron and oxygen. Ubiquitinated by a SCF complex containing FBXL5. Upon iron and oxygen depletion FBXL5 is degraded, preventing ubiquitination and allowing its RNA-binding activity.

The protein resides in the cytoplasm. Functionally, RNA-binding protein that binds to iron-responsive elements (IRES), which are stem-loop structures found in the 5'-UTR of ferritin, and delta aminolevulinic acid synthase mRNAs, and in the 3'-UTR of transferrin receptor mRNA. Binding to the IRE element in ferritin results in the repression of its mRNA translation. Binding of the protein to the transferrin receptor mRNA inhibits the degradation of this otherwise rapidly degraded mRNA. The protein is Iron-responsive element-binding protein 2 (Ireb2) of Mus musculus (Mouse).